The sequence spans 548 residues: Membrane protein insertase YidC (548 aa).

A helical membrane pass occupies residues 6 to 26; it reads NLLVIALLFVSFMIWQAWEQD. The interval 28–56 is disordered; it reads NPQPQTQQTTQTTTTAAGSAADQGVPASG. Residues 29–42 are compositionally biased toward low complexity; that stretch reads PQPQTQQTTQTTTT. Helical transmembrane passes span 350-370, 424-444, 458-478, and 499-519; these read FVGNWGFSIIIITFIVRGIMY, FPLIIQMPIFLALYYMLMGSI, LSAQDPYYILPILMGVTMFFI, and PVIFTVFFLWFPSGLVLYYIV.

The protein belongs to the OXA1/ALB3/YidC family. Type 1 subfamily. Interacts with the Sec translocase complex via SecD. Specifically interacts with transmembrane segments of nascent integral membrane proteins during membrane integration.

The protein localises to the cell inner membrane. Required for the insertion and/or proper folding and/or complex formation of integral membrane proteins into the membrane. Involved in integration of membrane proteins that insert both dependently and independently of the Sec translocase complex, as well as at least some lipoproteins. Aids folding of multispanning membrane proteins. This Salmonella newport (strain SL254) protein is Membrane protein insertase YidC.